Here is a 275-residue protein sequence, read N- to C-terminus: MYYKVLGQQNADAETVVLSSGLGGSGGFWQPQLAMLSAHFRVVVYDQYGTGASQGSVPAGYRMEDMADELAGLLNALNISRCHLVGHALGGIMGLHLALRYPALLQSLVVINGWTVLNSQTRRCFDVRRNLLLNSGVDAYVQAQPLFLYPGDWLSEHEAFLQEERQHQVANFQGMENLLHRLQALMDSDLTTSLKGVIAPTLALSAKDDLLVPWSCSADLASRLPHGEHLQMGYGGHAMSVTDPDTFNPILLDWLQRQASHPSGTPSDFIPVEMP.

An AB hydrolase-1 domain is found at 15–116 (TVVLSSGLGG…SLVVINGWTV (102 aa)).

This sequence belongs to the AB hydrolase superfamily. Hydrolase RutD family.

It catalyses the reaction carbamate + 2 H(+) = NH4(+) + CO2. In terms of biological role, involved in pyrimidine catabolism. May facilitate the hydrolysis of carbamate, a reaction that can also occur spontaneously. The polypeptide is Putative carbamate hydrolase RutD (Pantoea ananatis (strain LMG 20103)).